A 659-amino-acid polypeptide reads, in one-letter code: 4-alpha-glucanotransferase (659 aa).

Glu123 (nucleophile) is an active-site residue. Asp214 functions as the Proton donor in the catalytic mechanism.

This sequence belongs to the glycosyl hydrolase 57 family. In terms of assembly, homodimer.

The enzyme catalyses Transfers a segment of a (1-&gt;4)-alpha-D-glucan to a new position in an acceptor, which may be glucose or a (1-&gt;4)-alpha-D-glucan.. Inhibited by p-chloromercuribenzoic acid, monoiodoacetic acid, mercury and nickel ions. Functionally, catalyzes the transglycosylation of maltooligosaccharides, yielding maltooligosaccharides of various lengths and glucose. Maltose and glucose can be used as acceptors in the transfer reaction. The protein is 4-alpha-glucanotransferase (jgt) of Thermococcus litoralis (strain ATCC 51850 / DSM 5473 / JCM 8560 / NS-C).